The primary structure comprises 575 residues: Electron transfer flavoprotein-ubiquinone oxidoreductase, mitochondrial (575 aa).

The N-terminal 33 residues, 1–33 (MQRVLRAAAAGIGHASGHRAPRWGAAAAAARWL), are a transit peptide targeting the mitochondrion. Position 44 to 58 (44 to 58 (VVVVGAGPAGLAAAI)) interacts with FAD. An intramembrane segment occupies 82–103 (VGAHVLSGNVFEPRALDELIPK). A ubiquinone contacts are provided by glycine 276 and glycine 277. Residues 343–363 (IPNPVFPGGAIIGCSAGFLNV) lie within the membrane without spanning it. The [4Fe-4S] cluster site is built by cysteine 520, cysteine 544, cysteine 547, and cysteine 550. Residues 535–564 (QKLHINAQNCLHCKACDIKDPKQNIEWTVP) form the 4Fe-4S ferredoxin-type domain.

It belongs to the ETF-QO/FixC family. [4Fe-4S] cluster serves as cofactor. FAD is required as a cofactor.

It is found in the mitochondrion inner membrane. It carries out the reaction a ubiquinone + reduced [electron-transfer flavoprotein] = a ubiquinol + oxidized [electron-transfer flavoprotein] + H(+). In terms of biological role, accepts electrons from ETF and reduces ubiquinone. This Oryza sativa subsp. japonica (Rice) protein is Electron transfer flavoprotein-ubiquinone oxidoreductase, mitochondrial.